We begin with the raw amino-acid sequence, 145 residues long: Maximins 5/H4 type 2 (145 aa).

The N-terminal stretch at 1 to 18 (MNFKYIVAVSFLIASAYA) is a signal peptide. Propeptides lie at residues 19–43 (RSVQNDEQSLSQRDVLEEESLREIR) and 74–124 (TAEE…KEKR). Leu144 carries the post-translational modification Leucine amide.

This sequence belongs to the bombinin family. Expressed by the skin glands.

It is found in the secreted. Maximin-5 shows antibacterial activity against both Gram-positive and Gram-negative bacteria. The only exception is the resistance of E.coli. Also shows antimicrobial activity against fungi C.albicans, A.flavus and P.uticale. It has little hemolytic activity. It does not possess a significant cytotoxicity against tumor cell lines. It does not possess a significant anti-HIV activity. Its function is as follows. Maximin-H4 shows antibacterial activity against both Gram-positive and Gram-negative bacteria. It also shows antimicrobial activity against the fungus C.albicans. Shows strong hemolytic activity. This chain is Maximins 5/H4 type 2, found in Bombina maxima (Giant fire-bellied toad).